Consider the following 843-residue polypeptide: Eisosome protein 1 (843 aa).

Residues 1–53 form a disordered region; it reads MSLISAVEDRDIHNIGKTSGGGSRTSSITSSKKSLKHGSKSLRKPKVYQTTGE. Serine 2 carries the N-acetylserine modification. Residue serine 2 is modified to Phosphoserine. The span at 33 to 46 shows a compositional bias: basic residues; it reads KSLKHGSKSLRKPK. Phosphoserine is present on residues serine 88 and serine 130. Residues 120–174 are disordered; the sequence is KMGPKVVRNNSITSATSKTSKESQTKRKSKESPGAAASKAYSMTMETTSLSSQTN. Composition is skewed to polar residues over residues 127 to 137 and 163 to 174; these read RNNSITSATSK and TMETTSLSSQTN. Phosphoserine occurs at positions 182, 401, 584, and 710. Positions 717-843 are disordered; the sequence is DLPTQLEKIE…QDAISNQEKK (127 aa). Threonine 720 is subject to Phosphothreonine. The segment covering 752-764 has biased composition (low complexity); that stretch reads STAAKEATETSSA. 2 positions are modified to phosphoserine: serine 763 and serine 775. Basic and acidic residues predominate over residues 781-797; the sequence is SGKEDANDCKSAEHSKE. Polar residues predominate over residues 798–810; the sequence is ISVSQKAGNNKSL. A phosphoserine mark is found at serine 816, serine 828, serine 829, and serine 838.

This sequence belongs to the EIS1 family.

It is found in the cytoplasmic granule. The protein resides in the cell membrane. Required for normal formation of eisosomes, large cytoplasmic protein assemblies that localize to specialized domains on plasma membrane and mark the site of endocytosis. The chain is Eisosome protein 1 (EIS1) from Saccharomyces cerevisiae (strain ATCC 204508 / S288c) (Baker's yeast).